Consider the following 45-residue polypeptide: Large ribosomal subunit protein bL36 (45 aa).

Residues Met-1–Arg-20 are disordered.

The protein belongs to the bacterial ribosomal protein bL36 family.

The protein is Large ribosomal subunit protein bL36 of Chlamydia abortus (strain DSM 27085 / S26/3) (Chlamydophila abortus).